A 183-amino-acid chain; its full sequence is Acireductone dioxygenase (183 aa).

His99, His101, Glu105, and His144 together coordinate Fe(2+). His99, His101, Glu105, and His144 together coordinate Ni(2+).

It belongs to the acireductone dioxygenase (ARD) family. As to quaternary structure, monomer. Requires Fe(2+) as cofactor. Ni(2+) serves as cofactor.

It catalyses the reaction 1,2-dihydroxy-5-(methylsulfanyl)pent-1-en-3-one + O2 = 3-(methylsulfanyl)propanoate + CO + formate + 2 H(+). The catalysed reaction is 1,2-dihydroxy-5-(methylsulfanyl)pent-1-en-3-one + O2 = 4-methylsulfanyl-2-oxobutanoate + formate + 2 H(+). It functions in the pathway amino-acid biosynthesis; L-methionine biosynthesis via salvage pathway; L-methionine from S-methyl-5-thio-alpha-D-ribose 1-phosphate: step 5/6. In terms of biological role, catalyzes 2 different reactions between oxygen and the acireductone 1,2-dihydroxy-3-keto-5-methylthiopentene (DHK-MTPene) depending upon the metal bound in the active site. Fe-containing acireductone dioxygenase (Fe-ARD) produces formate and 2-keto-4-methylthiobutyrate (KMTB), the alpha-ketoacid precursor of methionine in the methionine recycle pathway. Ni-containing acireductone dioxygenase (Ni-ARD) produces methylthiopropionate, carbon monoxide and formate, and does not lie on the methionine recycle pathway. This is Acireductone dioxygenase from Microcystis aeruginosa (strain NIES-843 / IAM M-2473).